A 926-amino-acid chain; its full sequence is Lipoxygenase 4, chloroplastic (926 aa).

A chloroplast-targeting transit peptide spans 1–58 (MALANEIMGSRLIFERSSSLASPFHSRFSIKKKTQRTQFSINPFDPRPMRAVNSSGVV). Positions 106–228 (FKETLVKHLD…DHPSKRILFT (123 aa)) constitute a PLAT domain. The Lipoxygenase domain maps to 231–926 (PYLPSETPSG…CRGVPNSVSI (696 aa)). Fe cation contacts are provided by H585, H590, H777, N781, and I926.

It belongs to the lipoxygenase family. Fe cation serves as cofactor. As to expression, expressed in leaves.

The protein resides in the plastid. Its subcellular location is the chloroplast. The enzyme catalyses (9Z,12Z)-octadecadienoate + O2 = (13S)-hydroperoxy-(9Z,11E)-octadecadienoate. The catalysed reaction is (9Z,12Z,15Z)-octadecatrienoate + O2 = (13S)-hydroperoxy-(9Z,11E,15Z)-octadecatrienoate. It functions in the pathway lipid metabolism; oxylipin biosynthesis. In terms of biological role, plant lipoxygenases may be involved in a number of diverse aspects of plant physiology including growth and development, pest resistance, and senescence or responses to wounding. Catalyzes the hydroperoxidation of lipids containing a cis,cis-1,4-pentadiene structure. 13S-lipoxygenase that can use linolenic acid as substrates. This chain is Lipoxygenase 4, chloroplastic (LOX4), found in Arabidopsis thaliana (Mouse-ear cress).